Consider the following 246-residue polypeptide: NAD(P)H-quinone oxidoreductase subunit K (246 aa).

Residues Cys62, Cys63, Cys127, and Cys158 each coordinate [4Fe-4S] cluster.

This sequence belongs to the complex I 20 kDa subunit family. As to quaternary structure, NDH-1 can be composed of about 15 different subunits; different subcomplexes with different compositions have been identified which probably have different functions. Requires [4Fe-4S] cluster as cofactor.

Its subcellular location is the cellular thylakoid membrane. It carries out the reaction a plastoquinone + NADH + (n+1) H(+)(in) = a plastoquinol + NAD(+) + n H(+)(out). The enzyme catalyses a plastoquinone + NADPH + (n+1) H(+)(in) = a plastoquinol + NADP(+) + n H(+)(out). In terms of biological role, NDH-1 shuttles electrons from an unknown electron donor, via FMN and iron-sulfur (Fe-S) centers, to quinones in the respiratory and/or the photosynthetic chain. The immediate electron acceptor for the enzyme in this species is believed to be plastoquinone. Couples the redox reaction to proton translocation, and thus conserves the redox energy in a proton gradient. Cyanobacterial NDH-1 also plays a role in inorganic carbon-concentration. The chain is NAD(P)H-quinone oxidoreductase subunit K from Parasynechococcus marenigrum (strain WH8102).